Reading from the N-terminus, the 367-residue chain is Cis-3-hydroxy-L-proline dehydratase (367 aa).

The Proton donor/acceptor role is filled by Lys165. Mg(2+)-binding residues include Asp193, Glu218, and Asp241. Catalysis depends on Lys265, which acts as the Proton donor/acceptor.

The protein belongs to the mandelate racemase/muconate lactonizing enzyme family. The cofactor is Mg(2+).

The enzyme catalyses cis-3-hydroxy-L-proline = 1-pyrroline-2-carboxylate + H2O. Functionally, catalyzes the dehydration of cis-3-hydroxy-L-proline (c3LHyp) to Delta(1)-pyrroline-2-carboxylate (Pyr2C). Is likely involved in a degradation pathway that converts c3LHyp to L-proline, which allows L.aggregata to grow on c3LHyp as a sole carbon source. Also catalyzes the epimerization of c3LHyp to trans-3-hydroxy-D-proline (t3DHyp), a competing reaction occurring from the same enolate anion intermediate. L-proline, t3LHyp, t4LHyp, c4DHyp and their methylated derivatives are not substrates. The protein is Cis-3-hydroxy-L-proline dehydratase of Roseibium aggregatum (strain ATCC 25650 / DSM 13394 / JCM 20685 / NBRC 16684 / NCIMB 2208 / IAM 12614 / B1) (Stappia aggregata).